A 583-amino-acid chain; its full sequence is Pre-mRNA-processing protein 45 (583 aa).

4 disordered regions span residues 1–68, 177–253, 321–424, and 519–583; these read MTSI…APED, KPKN…LTAE, MQQR…EQNR, and RGAA…DEEN. Residues 203–225 show a composition bias toward basic and acidic residues; it reads TSRKNDRIMKIVERQQDPMEPPK. Positions 233–244 are enriched in pro residues; sequence RGPPSPPPPIMH. Positions 325–350 are enriched in basic and acidic residues; it reads LAEKEKAQKEEHLRALAQKAREERSR. A compositionally biased stretch (low complexity) spans 367–377; sequence RSYSDASSRSR. Composition is skewed to basic and acidic residues over residues 386–424, 519–538, and 569–583; these read ARER…EQNR, RGAA…KDTA, and PDSR…DEEN.

The protein belongs to the SNW family. In terms of assembly, associated with the spliceosome.

It localises to the nucleus. In terms of biological role, involved in pre-mRNA splicing. This is Pre-mRNA-processing protein 45 (prp45) from Emericella nidulans (strain FGSC A4 / ATCC 38163 / CBS 112.46 / NRRL 194 / M139) (Aspergillus nidulans).